The following is a 661-amino-acid chain: Sodium/potassium/calcium exchanger 2 (661 aa).

The Cytoplasmic portion of the chain corresponds to 1 to 38 (MDLQQSTTITSLEKWCLDESLSGCRRHYSVKKKLKLIR). The chain crosses the membrane as a helical span at residues 39–59 (VLGLFMGLVAISTVSFSISAF). The Extracellular segment spans residues 60–132 (SETDTQSTGE…DIFSLEERRK (73 aa)). The tract at residues 99–120 (PQPPLSKEGESENSTDHAQGDY) is disordered. Over residues 105 to 120 (KEGESENSTDHAQGDY) the composition is skewed to basic and acidic residues. N111 is a glycosylation site (N-linked (GlcNAc...) asparagine). Residues 133-153 (GAIILHVIGMIYMFIALAIVC) traverse the membrane as a helical segment. The Cytoplasmic portion of the chain corresponds to 154–178 (DEFFVPSLTVITEKLGISDDVAGAT). Residues 174–214 (VAGATFMAAGGSAPELFTSLIGVFIAHSNVGIGTIVGSAVF) form an Alpha-1 repeat. A helical transmembrane segment spans residues 179–199 (FMAAGGSAPELFTSLIGVFIA). The Extracellular segment spans residues 200–204 (HSNVG). A helical membrane pass occupies residues 205 to 225 (IGTIVGSAVFNILFVIGMCAL). Over 226-243 (FSREILNLTWWPLFRDVS) the chain is Cytoplasmic. Residues 244–264 (FYIVDLIMLIIFFLDNVIMWW) traverse the membrane as a helical segment. Position 265 (E265) is a topological domain, extracellular. Residues 266-286 (SLLLLTAYFCYVVFMKFNVQV) form a helical membrane-spanning segment. Topologically, residues 287-497 (EKWVKQMINR…PDVRKPSSRK (211 aa)) are cytoplasmic. The disordered stretch occupies residues 306-336 (EAQAKPSAARDKDEPTLPAKPRLQRGGSSAS). Phosphoserine occurs at positions 336 and 340. The disordered stretch occupies residues 397–439 (DENERQNGAANHVEKIELPNSTSTDVEMTPSSDASEPVQNGNL). Over residues 415–439 (PNSTSTDVEMTPSSDASEPVQNGNL) the composition is skewed to polar residues. A helical transmembrane segment spans residues 498 to 518 (FFPITFFGSITWIAVFSYLMV). Residues 519 to 533 (WWAHQVGETIGISEE) lie on the Extracellular side of the membrane. Residues 534-554 (IMGLTILAAGTSIPDLITSVI) form a helical membrane-spanning segment. The stretch at 541-572 (AAGTSIPDLITSVIVARKGLGDMAVSSSVGSN) is one Alpha-2 repeat. Residues 555–569 (VARKGLGDMAVSSSV) are Cytoplasmic-facing. The helical transmembrane segment at 570–590 (GSNIFDITVGLPLPWLLYTVI) threads the bilayer. Topologically, residues 591–602 (HRFQPVAVSSNG) are extracellular. Residues 603–623 (LFCAIVLLFIMLLFVILSIAL) traverse the membrane as a helical segment. Over 624–630 (CKWRMNK) the chain is Cytoplasmic. Residues 631-651 (ILGFIMFGLYFVFLVVSVLLE) traverse the membrane as a helical segment. Residues 652-661 (DRILTCPVSI) lie on the Extracellular side of the membrane.

It belongs to the Ca(2+):cation antiporter (CaCA) (TC 2.A.19) family. SLC24A subfamily.

It is found in the cell membrane. The catalysed reaction is Ca(2+)(out) + K(+)(out) + 4 Na(+)(in) = Ca(2+)(in) + K(+)(in) + 4 Na(+)(out). Functionally, calcium, potassium:sodium antiporter that transports 1 Ca(2+) and 1 K(+) in exchange for 4 Na(+). Required for learming and memory by regulating neuronal Ca(2+), which is essential for the development of synaptic plasticity. This is Sodium/potassium/calcium exchanger 2 (SLC24A2) from Homo sapiens (Human).